Consider the following 193-residue polypeptide: Cysteine and glycine-rich protein 2 (193 aa).

Residues 10–61 enclose the LIM zinc-binding 1 domain; it reads CGACGRTVYHAEEVQCDGRTFHRCCFLCMVCRKNLDSTTVAIHDEEIYCKSC. A Nuclear localization signal motif is present at residues 64 to 69; sequence KKYGPK. Residue Lys-91 forms a Glycyl lysine isopeptide (Lys-Gly) (interchain with G-Cter in SUMO2) linkage. Lys-112 and Lys-131 each carry N6-acetyllysine. The region spanning 119–170 is the LIM zinc-binding 2 domain; that stretch reads CSRCGDSVYAAEKIIGAGKPWHKNCFRCAKCGKSLESTTLTEKEGEIYCKGC. Lys-137 is subject to N6-acetyllysine; alternate. Position 137 is an N6-succinyllysine; alternate (Lys-137). Lys-161 is modified (N6-acetyllysine).

As to quaternary structure, interacts with KAT14. The LIM domain 1 is necessary and sufficient for this interaction. Interacts with GLRX3. Highly expressed in the aorta; weakly found in the kidney, thymus, and intestine. Barely detectable in brain, testis, esophagus, lung, liver, aortic adventitia, vena cava, or uterus; not present in heart and skeletal muscle.

Its subcellular location is the nucleus. Drastically down-regulated in response to PDGF-BB or cell injury, that promote smooth muscle cell proliferation and dedifferentiation. Seems to play a role in the development of the embryonic vascular system. The sequence is that of Cysteine and glycine-rich protein 2 (Csrp2) from Rattus norvegicus (Rat).